The sequence spans 753 residues: 5-methyltetrahydropteroyltriglutamate--homocysteine methyltransferase (753 aa).

5-methyltetrahydropteroyltri-L-glutamate is bound by residues 17-20 (RELK) and K117. L-homocysteine-binding positions include 431–433 (IGS) and E484. L-methionine is bound by residues 431 to 433 (IGS) and E484. 5-methyltetrahydropteroyltri-L-glutamate is bound by residues 515-516 (RC) and W561. D599 is a binding site for L-homocysteine. D599 lines the L-methionine pocket. A 5-methyltetrahydropteroyltri-L-glutamate-binding site is contributed by E605. Positions 641, 643, and 665 each coordinate Zn(2+). H694 (proton donor) is an active-site residue. Residue C726 coordinates Zn(2+).

The protein belongs to the vitamin-B12 independent methionine synthase family. Zn(2+) serves as cofactor.

It carries out the reaction 5-methyltetrahydropteroyltri-L-glutamate + L-homocysteine = tetrahydropteroyltri-L-glutamate + L-methionine. The protein operates within amino-acid biosynthesis; L-methionine biosynthesis via de novo pathway; L-methionine from L-homocysteine (MetE route): step 1/1. Its function is as follows. Catalyzes the transfer of a methyl group from 5-methyltetrahydrofolate to homocysteine resulting in methionine formation. This is 5-methyltetrahydropteroyltriglutamate--homocysteine methyltransferase from Citrobacter koseri (strain ATCC BAA-895 / CDC 4225-83 / SGSC4696).